A 113-amino-acid chain; its full sequence is Photosystem II reaction center Psb28 protein (113 aa).

It belongs to the Psb28 family. In terms of assembly, part of the photosystem II complex.

The protein localises to the cellular thylakoid membrane. The sequence is that of Photosystem II reaction center Psb28 protein from Prochlorococcus marinus (strain NATL2A).